Here is a 207-residue protein sequence, read N- to C-terminus: Urease accessory protein UreG (207 aa).

14–21 (GPVGSGKT) contacts GTP.

The protein belongs to the SIMIBI class G3E GTPase family. UreG subfamily. Homodimer. UreD, UreF and UreG form a complex that acts as a GTP-hydrolysis-dependent molecular chaperone, activating the urease apoprotein by helping to assemble the nickel containing metallocenter of UreC. The UreE protein probably delivers the nickel.

It is found in the cytoplasm. Functionally, facilitates the functional incorporation of the urease nickel metallocenter. This process requires GTP hydrolysis, probably effectuated by UreG. The protein is Urease accessory protein UreG of Pseudomonas entomophila (strain L48).